A 307-amino-acid chain; its full sequence is Undecaprenyl-diphosphatase (307 aa).

The next 6 membrane-spanning stretches (helical) occupy residues 40-60 (AAKT…VVYF), 79-99 (LRLA…GLLF), 107-127 (LFGP…MIGV), 183-203 (AAAA…ATVF), 219-239 (IVAL…VIAV), and 249-269 (LAPF…LWIA).

The protein belongs to the UppP family.

It is found in the cell inner membrane. It catalyses the reaction di-trans,octa-cis-undecaprenyl diphosphate + H2O = di-trans,octa-cis-undecaprenyl phosphate + phosphate + H(+). Functionally, catalyzes the dephosphorylation of undecaprenyl diphosphate (UPP). Confers resistance to bacitracin. The chain is Undecaprenyl-diphosphatase from Sorangium cellulosum (strain So ce56) (Polyangium cellulosum (strain So ce56)).